Consider the following 299-residue polypeptide: Homoserine O-acetyltransferase (299 aa).

The Acyl-thioester intermediate role is filled by Cys142. 2 residues coordinate substrate: Lys163 and Ser192. Catalysis depends on His235, which acts as the Proton acceptor. Residue Glu237 is part of the active site. Arg249 contributes to the substrate binding site.

This sequence belongs to the MetA family.

Its subcellular location is the cytoplasm. It carries out the reaction L-homoserine + acetyl-CoA = O-acetyl-L-homoserine + CoA. It participates in amino-acid biosynthesis; L-methionine biosynthesis via de novo pathway; O-acetyl-L-homoserine from L-homoserine: step 1/1. Functionally, transfers an acetyl group from acetyl-CoA to L-homoserine, forming acetyl-L-homoserine. This is Homoserine O-acetyltransferase from Synechococcus sp. (strain ATCC 27144 / PCC 6301 / SAUG 1402/1) (Anacystis nidulans).